We begin with the raw amino-acid sequence, 274 residues long: tRNA uridine(34) hydroxylase (274 aa).

A Rhodanese domain is found at Ser121–Asn217. Cys177 acts as the Cysteine persulfide intermediate in catalysis.

This sequence belongs to the TrhO family.

It carries out the reaction uridine(34) in tRNA + AH2 + O2 = 5-hydroxyuridine(34) in tRNA + A + H2O. Its function is as follows. Catalyzes oxygen-dependent 5-hydroxyuridine (ho5U) modification at position 34 in tRNAs. The chain is tRNA uridine(34) hydroxylase from Ehrlichia canis (strain Jake).